The following is a 355-amino-acid chain: Phosphoribosylformylglycinamidine cyclo-ligase (355 aa).

Belongs to the AIR synthase family.

It is found in the cytoplasm. It carries out the reaction 2-formamido-N(1)-(5-O-phospho-beta-D-ribosyl)acetamidine + ATP = 5-amino-1-(5-phospho-beta-D-ribosyl)imidazole + ADP + phosphate + H(+). Its pathway is purine metabolism; IMP biosynthesis via de novo pathway; 5-amino-1-(5-phospho-D-ribosyl)imidazole from N(2)-formyl-N(1)-(5-phospho-D-ribosyl)glycinamide: step 2/2. The chain is Phosphoribosylformylglycinamidine cyclo-ligase from Beijerinckia indica subsp. indica (strain ATCC 9039 / DSM 1715 / NCIMB 8712).